The primary structure comprises 226 residues: Ribonuclease 3 (226 aa).

The 123-residue stretch at Val6–Asp128 folds into the RNase III domain. Glu41 is a Mg(2+) binding site. The active site involves Asp45. Mg(2+) contacts are provided by Asp114 and Glu117. Glu117 is an active-site residue. The region spanning Asp155 to Leu225 is the DRBM domain.

It belongs to the ribonuclease III family. As to quaternary structure, homodimer. It depends on Mg(2+) as a cofactor.

The protein resides in the cytoplasm. It catalyses the reaction Endonucleolytic cleavage to 5'-phosphomonoester.. Functionally, digests double-stranded RNA. Involved in the processing of primary rRNA transcript to yield the immediate precursors to the large and small rRNAs (23S and 16S). Processes some mRNAs, and tRNAs when they are encoded in the rRNA operon. Processes pre-crRNA and tracrRNA of type II CRISPR loci if present in the organism. The protein is Ribonuclease 3 of Proteus mirabilis (strain HI4320).